Reading from the N-terminus, the 396-residue chain is S-adenosylmethionine synthase 3 (396 aa).

Mg(2+) is bound at residue Glu-13. Residue His-19 coordinates ATP. Glu-47 contributes to the K(+) binding site. L-methionine contacts are provided by Glu-60 and Gln-103. ATP-binding positions include Asp-171–Lys-173, Ser-239–Phe-242, Asp-250, Arg-256–Lys-257, Ala-273, Lys-277, and Lys-281. Asp-250 is an L-methionine binding site. Lys-281 is an L-methionine binding site.

This sequence belongs to the AdoMet synthase family. As to quaternary structure, homotetramer. Mn(2+) serves as cofactor. The cofactor is Mg(2+). It depends on Co(2+) as a cofactor. K(+) is required as a cofactor. As to expression, expressed in roots, stems and leaves (at protein level).

The protein resides in the cytoplasm. It carries out the reaction L-methionine + ATP + H2O = S-adenosyl-L-methionine + phosphate + diphosphate. It participates in amino-acid biosynthesis; S-adenosyl-L-methionine biosynthesis; S-adenosyl-L-methionine from L-methionine: step 1/1. Its function is as follows. Catalyzes the formation of S-adenosylmethionine from methionine and ATP. The reaction comprises two steps that are both catalyzed by the same enzyme: formation of S-adenosylmethionine (AdoMet) and triphosphate, and subsequent hydrolysis of the triphosphate. May be involved in the synthesis of betain in response to abiotic stress such as high salinity. This chain is S-adenosylmethionine synthase 3 (SAMS3), found in Atriplex nummularia (Old man saltbush).